The primary structure comprises 129 residues: Protein NrdI (129 aa).

It belongs to the NrdI family.

Probably involved in ribonucleotide reductase function. In Macrococcus caseolyticus (strain JCSC5402) (Macrococcoides caseolyticum), this protein is Protein NrdI.